We begin with the raw amino-acid sequence, 183 residues long: Ribosome rescue factor SmrB (183 aa).

Residues 98-173 (LDLHGLTQQQ…GDAALLVLIE (76 aa)) enclose the Smr domain.

It belongs to the SmrB family. In terms of assembly, associates with collided ribosomes, but not with correctly translating polysomes.

In terms of biological role, acts as a ribosome collision sensor. Detects stalled/collided disomes (pairs of ribosomes where the leading ribosome is stalled and a second ribosome has collided with it) and endonucleolytically cleaves mRNA at the 5' boundary of the stalled ribosome. Stalled/collided disomes form a new interface (primarily via the 30S subunits) that binds SmrB. Cleaved mRNA becomes available for tmRNA ligation, leading to ribosomal subunit dissociation and rescue of stalled ribosomes. This is Ribosome rescue factor SmrB from Klebsiella pneumoniae (strain 342).